A 473-amino-acid polypeptide reads, in one-letter code: Serine palmitoyltransferase 1 (473 aa).

Topologically, residues methionine 1–glutamine 15 are lumenal. The segment at methionine 1–proline 66 is interaction with SPTLC2. Residues alanine 16–isoleucine 36 traverse the membrane as a helical segment. Residues arginine 37–leucine 473 are Cytoplasmic-facing. Tyrosine 164 is subject to Phosphotyrosine; by ABL.

This sequence belongs to the class-II pyridoxal-phosphate-dependent aminotransferase family. Component of the serine palmitoyltransferase (SPT) complex, which is also composed of SPTLC2 or SPTLC3 and SPTSSA or SPTSSB. The heterodimer with SPTLC2 or SPTLC3 forms the catalytic core of the enzyme, while SPTSSA or SPTSSB subunits determine substrate specificity. SPT also interacts with ORMDL proteins, especially ORMDL3, which negatively regulate SPT activity in the presence of ceramides. Forms dimers of heterodimers with SPTLC2. Interacts with RTN4 (isoform B). Pyridoxal 5'-phosphate is required as a cofactor. In terms of processing, phosphorylation at Tyr-164 inhibits activity and promotes cell survival. Expressed in astrocytes.

Its subcellular location is the endoplasmic reticulum membrane. It catalyses the reaction L-serine + hexadecanoyl-CoA + H(+) = 3-oxosphinganine + CO2 + CoA. It carries out the reaction octadecanoyl-CoA + L-serine + H(+) = 3-oxoeicosasphinganine + CO2 + CoA. The catalysed reaction is tetradecanoyl-CoA + L-serine + H(+) = 3-oxohexadecasphinganine + CO2 + CoA. The enzyme catalyses dodecanoyl-CoA + L-serine + H(+) = 3-oxotetradecasphinganine + CO2 + CoA. It functions in the pathway lipid metabolism; sphingolipid metabolism. Its activity is regulated as follows. SPT complex catalytic activity is negatively regulated by ORMDL proteins, including ORMDL3, in the presence of ceramides. This mechanism allows to maintain ceramide levels at sufficient concentrations for the production of complex sphingolipids, but which prevents the accumulation of ceramides to levels that trigger apoptosis. Its function is as follows. Component of the serine palmitoyltransferase multisubunit enzyme (SPT) that catalyzes the initial and rate-limiting step in sphingolipid biosynthesis by condensing L-serine and activated acyl-CoA (most commonly palmitoyl-CoA) to form long-chain bases. The SPT complex is also composed of SPTLC2 or SPTLC3 and SPTSSA or SPTSSB. Within this complex, the heterodimer with SPTLC2 or SPTLC3 forms the catalytic core. The composition of the serine palmitoyltransferase (SPT) complex determines the substrate preference. The SPTLC1-SPTLC2-SPTSSA complex shows a strong preference for C16-CoA substrate, while the SPTLC1-SPTLC3-SPTSSA isozyme uses both C14-CoA and C16-CoA as substrates, with a slight preference for C14-CoA. The SPTLC1-SPTLC2-SPTSSB complex shows a strong preference for C18-CoA substrate, while the SPTLC1-SPTLC3-SPTSSB isozyme displays an ability to use a broader range of acyl-CoAs, without apparent preference. Required for adipocyte cell viability and metabolic homeostasis. This chain is Serine palmitoyltransferase 1, found in Rattus norvegicus (Rat).